We begin with the raw amino-acid sequence, 1097 residues long: DNA-directed RNA polymerase subunit beta (1097 aa).

Residues 1072–1097 are disordered; the sequence is QDINPRRNTPSRPTYESLGTSEYEED. Polar residues predominate over residues 1077-1091; it reads RRNTPSRPTYESLGT.

The protein belongs to the RNA polymerase beta chain family. As to quaternary structure, in cyanobacteria the RNAP catalytic core is composed of 2 alpha, 1 beta, 1 beta', 1 gamma and 1 omega subunit. When a sigma factor is associated with the core the holoenzyme is formed, which can initiate transcription.

It carries out the reaction RNA(n) + a ribonucleoside 5'-triphosphate = RNA(n+1) + diphosphate. In terms of biological role, DNA-dependent RNA polymerase catalyzes the transcription of DNA into RNA using the four ribonucleoside triphosphates as substrates. The chain is DNA-directed RNA polymerase subunit beta from Prochlorococcus marinus (strain MIT 9215).